A 444-amino-acid chain; its full sequence is Glutamyl-tRNA reductase (444 aa).

Residues 49–52 (TCNR), Ser-109, 114–116 (ETQ), and Gln-120 each bind substrate. The Nucleophile role is filled by Cys-50. 189-194 (GAGKMG) serves as a coordination point for NADP(+).

It belongs to the glutamyl-tRNA reductase family. Homodimer.

It carries out the reaction (S)-4-amino-5-oxopentanoate + tRNA(Glu) + NADP(+) = L-glutamyl-tRNA(Glu) + NADPH + H(+). The protein operates within porphyrin-containing compound metabolism; protoporphyrin-IX biosynthesis; 5-aminolevulinate from L-glutamyl-tRNA(Glu): step 1/2. Functionally, catalyzes the NADPH-dependent reduction of glutamyl-tRNA(Glu) to glutamate 1-semialdehyde (GSA). The chain is Glutamyl-tRNA reductase from Bacillus anthracis (strain A0248).